The sequence spans 373 residues: MTAPSMSRPDDVRPEVLDFKPYVPGLSIDEIRDRFGLADVVKLASNENPLGTSPVVQRTLKTKADLAFRYAQSGNPRLTRAIAAHHGVAPERVVAGNGSDEIIDLLIRVRATPGKHNIVAFRPCFSIYELQAKFCGLEFRQADLRPDFTFDWDAFLAATDENTAIAFVTTPDNPSGWCPPVSELEHVARTLPPSCLFVIDEAYMDFCGDEAAHSLLSRLDAFPNIAVLRTFSKSFGLAGLRLGYGILPERLADYLHRVRLPFSVNILAEEAGLAALEDTVFRSETLRVTAEGRAYIAEGLTALGCEVLPSWANFIMFRPPTDATDLFEALLRRGIIIRPLKSYGLPQHLRVSMGNADENRRFIAACKEILPHA.

Position 233 is an N6-(pyridoxal phosphate)lysine (K233).

Belongs to the class-II pyridoxal-phosphate-dependent aminotransferase family. Histidinol-phosphate aminotransferase subfamily. As to quaternary structure, homodimer. It depends on pyridoxal 5'-phosphate as a cofactor.

It catalyses the reaction L-histidinol phosphate + 2-oxoglutarate = 3-(imidazol-4-yl)-2-oxopropyl phosphate + L-glutamate. It functions in the pathway amino-acid biosynthesis; L-histidine biosynthesis; L-histidine from 5-phospho-alpha-D-ribose 1-diphosphate: step 7/9. The polypeptide is Histidinol-phosphate aminotransferase (Nitratidesulfovibrio vulgaris (strain DP4) (Desulfovibrio vulgaris)).